We begin with the raw amino-acid sequence, 304 residues long: Coenzyme PQQ synthesis protein B (304 aa).

The protein belongs to the PqqB family.

The protein operates within cofactor biosynthesis; pyrroloquinoline quinone biosynthesis. May be involved in the transport of PQQ or its precursor to the periplasm. The chain is Coenzyme PQQ synthesis protein B from Pseudomonas aeruginosa (strain UCBPP-PA14).